A 24-amino-acid polypeptide reads, in one-letter code: Positive regulator of RepFIC repA1 expression (24 aa).

This is Positive regulator of RepFIC repA1 expression (repL) from Escherichia coli.